We begin with the raw amino-acid sequence, 315 residues long: Aspartate carbamoyltransferase catalytic subunit (315 aa).

Arg65 and Thr66 together coordinate carbamoyl phosphate. Lys93 contributes to the L-aspartate binding site. Carbamoyl phosphate is bound by residues Arg115, His143, and Gln146. L-aspartate-binding residues include Arg176 and Arg231. Carbamoyl phosphate-binding residues include Gly272 and Pro273.

It belongs to the aspartate/ornithine carbamoyltransferase superfamily. ATCase family. Heterododecamer (2C3:3R2) of six catalytic PyrB chains organized as two trimers (C3), and six regulatory PyrI chains organized as three dimers (R2).

The enzyme catalyses carbamoyl phosphate + L-aspartate = N-carbamoyl-L-aspartate + phosphate + H(+). It participates in pyrimidine metabolism; UMP biosynthesis via de novo pathway; (S)-dihydroorotate from bicarbonate: step 2/3. Functionally, catalyzes the condensation of carbamoyl phosphate and aspartate to form carbamoyl aspartate and inorganic phosphate, the committed step in the de novo pyrimidine nucleotide biosynthesis pathway. In Hyphomonas neptunium (strain ATCC 15444), this protein is Aspartate carbamoyltransferase catalytic subunit.